An 85-amino-acid polypeptide reads, in one-letter code: MPQIKSAIKRVKTQNATNKRNASELSKLRTAIKKFKNAVETDSKEDVSKLHLEAVRALDKAASKGLIHKNKAARDKSRLTKLANK.

Positions M1 to A22 are disordered. Polar residues predominate over residues T13–A22.

It belongs to the bacterial ribosomal protein bS20 family.

Its function is as follows. Binds directly to 16S ribosomal RNA. This is Small ribosomal subunit protein bS20 from Lactobacillus acidophilus (strain ATCC 700396 / NCK56 / N2 / NCFM).